Here is a 475-residue protein sequence, read N- to C-terminus: MSASGKEKPLKDVPGSYGVPVVGALKDRLDFYWFQGEVEFYKSRMEKNQSTVFRVNFPPGPPGFPEGHGIVLLDQVSYSVLLDNAKVDKRDTLIGSYMPDLAFTGGYRTLPYLDTAEEKHTTYKSLMFEILHESAQRFGPELSSAFDRTAQEWEAKIAKDGSVESLSTAGNMVIQFLYKTITHQDPMATMGDDPHSVYMAWTGVQFAGIAYTNLPHITEELLMHSFQLPFFPIKKKYEQIVEFFRSAGSGLLDLAVTKYGLDREEALHNLVFSFGINTRLGLLKMFPPILFFIARAGAEFQARLKQEIRGRMKKREDAASIQALGDLKLVKATVLEVFRLMPSIFVAFGRARQDLEVESHDARYKIKKGELLGTHQYFVMRDPVVFKDPHSFVPDRFMGSEGAALLPHIVWSNGRETDSPTPTNKQCPGKNQAELIAVQFIAEMFLRYDSWEVTQESSVSATKLDVHLCKLVKRS.

Cysteine 427 is a heme binding site.

This sequence belongs to the cytochrome P450 family. Heme is required as a cofactor.

It carries out the reaction (13S)-hydroperoxy-(9Z,11E)-octadecadienoate = etheroleate + H2O. It catalyses the reaction (13S)-hydroperoxy-(9Z,11E,15Z)-octadecatrienoate = etherolenate + H2O. The protein operates within lipid metabolism; oxylipin biosynthesis. Divinyl ether synthase involved in oxylipin biosynthesis. Catalyzes the conversion of (13S)-hydroperoxy-(9Z,11E)-octadecadienoate (13-HPOD) to etheroleate and (13S)-hydroperoxy-(9Z,11E,15Z)-octadecatrienoate (13-HPOT) to etherolenate. Has no activity with the corresponding 9-hydroperoxides (9-HPOD and 9-HPOT). The chain is Divinyl ether synthase CYP74M1 from Selaginella moellendorffii (Spikemoss).